The sequence spans 628 residues: Dihydroxy-acid dehydratase (628 aa).

Asp80 provides a ligand contact to Mg(2+). Cys121 contributes to the [2Fe-2S] cluster binding site. Mg(2+)-binding residues include Asp122 and Lys123. Lys123 carries the N6-carboxylysine modification. [2Fe-2S] cluster is bound at residue Cys207. Position 503 (Glu503) interacts with Mg(2+). Catalysis depends on Ser529, which acts as the Proton acceptor.

Belongs to the IlvD/Edd family. As to quaternary structure, homodimer. [2Fe-2S] cluster serves as cofactor. Mg(2+) is required as a cofactor.

It carries out the reaction (2R)-2,3-dihydroxy-3-methylbutanoate = 3-methyl-2-oxobutanoate + H2O. The catalysed reaction is (2R,3R)-2,3-dihydroxy-3-methylpentanoate = (S)-3-methyl-2-oxopentanoate + H2O. Its pathway is amino-acid biosynthesis; L-isoleucine biosynthesis; L-isoleucine from 2-oxobutanoate: step 3/4. It functions in the pathway amino-acid biosynthesis; L-valine biosynthesis; L-valine from pyruvate: step 3/4. Functions in the biosynthesis of branched-chain amino acids. Catalyzes the dehydration of (2R,3R)-2,3-dihydroxy-3-methylpentanoate (2,3-dihydroxy-3-methylvalerate) into 2-oxo-3-methylpentanoate (2-oxo-3-methylvalerate) and of (2R)-2,3-dihydroxy-3-methylbutanoate (2,3-dihydroxyisovalerate) into 2-oxo-3-methylbutanoate (2-oxoisovalerate), the penultimate precursor to L-isoleucine and L-valine, respectively. This is Dihydroxy-acid dehydratase from Psychrobacter arcticus (strain DSM 17307 / VKM B-2377 / 273-4).